The following is an 83-amino-acid chain: Cytochrome b559 subunit alpha (83 aa).

The helical transmembrane segment at 21–35 (VIHSITIPSLFIAGW) threads the bilayer. His-23 contributes to the heme binding site.

Belongs to the PsbE/PsbF family. In terms of assembly, heterodimer of an alpha subunit and a beta subunit. PSII is composed of 1 copy each of membrane proteins PsbA, PsbB, PsbC, PsbD, PsbE, PsbF, PsbH, PsbI, PsbJ, PsbK, PsbL, PsbM, PsbT, PsbX, PsbY, PsbZ, Psb30/Ycf12, at least 3 peripheral proteins of the oxygen-evolving complex and a large number of cofactors. It forms dimeric complexes. Requires heme b as cofactor.

It localises to the plastid. Its subcellular location is the chloroplast thylakoid membrane. Functionally, this b-type cytochrome is tightly associated with the reaction center of photosystem II (PSII). PSII is a light-driven water:plastoquinone oxidoreductase that uses light energy to abstract electrons from H(2)O, generating O(2) and a proton gradient subsequently used for ATP formation. It consists of a core antenna complex that captures photons, and an electron transfer chain that converts photonic excitation into a charge separation. The sequence is that of Cytochrome b559 subunit alpha from Zygnema circumcarinatum (Green alga).